Here is a 365-residue protein sequence, read N- to C-terminus: Myocyte-specific enhancer factor 2B (365 aa).

In terms of domain architecture, MADS-box spans 3 to 57 (RKKIQISRILDQRNRQVTFTKRKFGLMKKAYELSVLCDCEIALIIFNSANRLFQY). The segment at residues 58–86 (ASTDMDRVLLKYTEYSEPHESRTNTDILE) is a DNA-binding region (mef2-type). Disordered stretches follow at residues 94–124 (GLDG…GDPA), 142–309 (VVYG…SPGP), and 321–365 (AGCP…KTQQ). Over residues 98–108 (PELEPDEGPEE) the composition is skewed to acidic residues. A compositionally biased stretch (polar residues) spans 223–240 (NTSRSLYSGLQNPCSTAT). Low complexity-rich tracts occupy residues 277-289 (PQSA…SLRP) and 326-346 (PTAG…SPGT). Over residues 354–365 (TSLQASSEKTQQ) the composition is skewed to polar residues.

This sequence belongs to the MEF2 family. In terms of assembly, interacts with HDAC7. Heterodimer. Interacts with HDAC9. Expressed in skeletal and cardiac muscle and brain.

It localises to the nucleus. Functionally, transcriptional activator which binds specifically to the MEF2 element, 5'-YTA[AT](4)TAR-3', found in numerous muscle-specific genes. Activates transcription via this element. May be involved in muscle-specific and/or growth factor-related transcription. The polypeptide is Myocyte-specific enhancer factor 2B (MEF2B) (Homo sapiens (Human)).